A 157-amino-acid chain; its full sequence is UPF0254 protein MTH_1148 (157 aa).

Belongs to the UPF0254 family.

This is UPF0254 protein MTH_1148 from Methanothermobacter thermautotrophicus (strain ATCC 29096 / DSM 1053 / JCM 10044 / NBRC 100330 / Delta H) (Methanobacterium thermoautotrophicum).